The chain runs to 308 residues: Pantothenate kinase (308 aa).

93–100 contacts ATP; sequence GSVAVGKS.

The protein belongs to the prokaryotic pantothenate kinase family.

It localises to the cytoplasm. The enzyme catalyses (R)-pantothenate + ATP = (R)-4'-phosphopantothenate + ADP + H(+). It participates in cofactor biosynthesis; coenzyme A biosynthesis; CoA from (R)-pantothenate: step 1/5. This chain is Pantothenate kinase, found in Corynebacterium diphtheriae (strain ATCC 700971 / NCTC 13129 / Biotype gravis).